The chain runs to 38 residues: Cytochrome b6-f complex subunit 5 (38 aa).

A helical transmembrane segment spans residues 5-25; the sequence is LLLGIVLGLIPVTLAGLFVAA.

The protein belongs to the PetG family. As to quaternary structure, the 4 large subunits of the cytochrome b6-f complex are cytochrome b6, subunit IV (17 kDa polypeptide, PetD), cytochrome f and the Rieske protein, while the 4 small subunits are PetG, PetL, PetM and PetN. The complex functions as a dimer.

Its subcellular location is the cellular thylakoid membrane. Component of the cytochrome b6-f complex, which mediates electron transfer between photosystem II (PSII) and photosystem I (PSI), cyclic electron flow around PSI, and state transitions. PetG is required for either the stability or assembly of the cytochrome b6-f complex. This is Cytochrome b6-f complex subunit 5 from Synechocystis sp. (strain ATCC 27184 / PCC 6803 / Kazusa).